We begin with the raw amino-acid sequence, 875 residues long: Leucine--tRNA ligase (875 aa).

The 'HIGH' region motif lies at 43–53 (PYPSGRIHMGH). A 'KMSKS' region motif is present at residues 633–637 (KMSKS). Lys-636 serves as a coordination point for ATP.

It belongs to the class-I aminoacyl-tRNA synthetase family.

It localises to the cytoplasm. It catalyses the reaction tRNA(Leu) + L-leucine + ATP = L-leucyl-tRNA(Leu) + AMP + diphosphate. In Bartonella bacilliformis (strain ATCC 35685 / KC583 / Herrer 020/F12,63), this protein is Leucine--tRNA ligase.